Here is a 278-residue protein sequence, read N- to C-terminus: Urease accessory protein UreD 3 (278 aa).

Belongs to the UreD family. UreD, UreF and UreG form a complex that acts as a GTP-hydrolysis-dependent molecular chaperone, activating the urease apoprotein by helping to assemble the nickel containing metallocenter of UreC. The UreE protein probably delivers the nickel.

Its subcellular location is the cytoplasm. Its function is as follows. Required for maturation of urease via the functional incorporation of the urease nickel metallocenter. The sequence is that of Urease accessory protein UreD 3 from Bradyrhizobium sp. (strain BTAi1 / ATCC BAA-1182).